A 759-amino-acid polypeptide reads, in one-letter code: DNA topoisomerase 3 (759 aa).

A Toprim domain is found at 3–147 (RALFVAEKND…RLDIFRARFS (145 aa)). Positions 165–590 (DEKTVAAVDC…EQIGKYRAIF (426 aa)) constitute a Topo IA-type catalytic domain. Residue Tyr-334 is the O-(5'-phospho-DNA)-tyrosine intermediate of the active site. The interval 609 to 715 (DKNNQAGGGP…KEQEEEEEVF (107 aa)) is disordered. Residues 614–639 (AGGGPGGPGGGGGPPRGPGGGGGGGP) are compositionally biased toward gly residues. A compositionally biased stretch (pro residues) spans 640–649 (TGPPAPPKPP). The Zn(2+) site is built by Cys-716, Cys-718, Cys-743, and Cys-753. Residues 716-759 (CQCPEPMRAVTKVVQKEGPNKGKKFYTCSLPYTSSEKCNFFKWA) form a GRF-type zinc finger.

Belongs to the type IA topoisomerase family. In terms of assembly, component of the BTR double Holliday Junction dissolution complex composed of at least him-6, top-3, rmh-1 and rmif-2, which is involved in double strand break repair in the germline. May interact with rmh-1.

It is found in the nucleus. It catalyses the reaction ATP-independent breakage of single-stranded DNA, followed by passage and rejoining.. In terms of biological role, component of the BTR double Holliday Junction dissolution complex, which is involved in homologous recombination during meiotic double strand break in the germline. Releases the supercoiling and torsional tension of DNA introduced during the DNA replication and transcription by transiently cleaving and rejoining one strand of the DNA duplex. Introduces a single-strand break via transesterification at a target site in duplex DNA. The scissile phosphodiester is attacked by the catalytic tyrosine of the enzyme, resulting in the formation of a DNA-(5'-phosphotyrosyl)-enzyme intermediate and the expulsion of a 3'-OH DNA strand. The free DNA strand than undergoes passage around the unbroken strand thus removing DNA supercoils. Finally, in the religation step, the DNA 3'-OH attacks the covalent intermediate to expel the active-site tyrosine and restore the DNA phosphodiester backbone. The chain is DNA topoisomerase 3 from Caenorhabditis elegans.